A 114-amino-acid chain; its full sequence is Putative antiporter subunit mnhC2 (114 aa).

The next 3 helical transmembrane spans lie at 3–23 (LILLLVIGFLVFIGTYMILSI), 25–45 (LIRIVIGISIYTHAGNLIIMS), and 72–92 (AIVLTAIVIGFGMTAFLLVLI).

Belongs to the CPA3 antiporters (TC 2.A.63) subunit C family. As to quaternary structure, may form a heterooligomeric complex that consists of seven subunits: mnhA2, mnhB2, mnhC2, mnhD2, mnhE2, mnhF2 and mnhG2.

Its subcellular location is the cell membrane. The protein is Putative antiporter subunit mnhC2 (mnhC2) of Staphylococcus epidermidis (strain ATCC 12228 / FDA PCI 1200).